A 485-amino-acid polypeptide reads, in one-letter code: MALLVEKTSSGREYKVKDMSQADFGRLELELAEVEMPGLMACRTEFGPSQPFKGARITGSLHMTIQTAVLIETLTALGAEVRWCSCNIFSTQDHAAAAIARDSAAVFAWKGETLQEYWWCTERALDWGPGGGPDLIVDDGGDATLLIHEGVKAEEIFEKTGQVPDPTSTDNPEFQIVLSIIKEGLQVDPKKYHKMKERLVGVSEETTTGVKRLYQMQQNGTLLFPAINVNDSVTKSKFDNLYGCRHSLPDGLMRATDVMIAGKVAVICGYGDVGKGCAAAMKTAGARVIVTEIDPICALQALMEGLQVLTLEDVVSEADIFVTTTGNKDIIMVDHMRKMKNNAIVCNIGHFDNEIDMLGLETYPGVKRITIKPQTDRWVFPETKAGIIVLAEGRLMNLGCATGHPSFVMSCSFTNQVIAQLELWNEKASGKYEKKVYVLPKHLDEKVALLHLGKLGARLTKLSKDQSDYVSIPIEGPYKPPHYRY.

3 residues coordinate substrate: T64, D139, and E205. Position 206 to 208 (T206 to T208) interacts with NAD(+). Substrate is bound by residues K235 and D239. NAD(+) is bound by residues G271–G276, E292, I348–H350, N397, H404, K479, K479–Y483, and Y483.

Belongs to the adenosylhomocysteinase family. In terms of assembly, homotetramer. It depends on NAD(+) as a cofactor.

The enzyme catalyses S-adenosyl-L-homocysteine + H2O = L-homocysteine + adenosine. It functions in the pathway amino-acid biosynthesis; L-homocysteine biosynthesis; L-homocysteine from S-adenosyl-L-homocysteine: step 1/1. Its function is as follows. Essential protein during embryogenesis. Adenosylhomocysteine is a competitive inhibitor of S-adenosyl-L-methionine-dependent methyl transferase reactions; therefore adenosylhomocysteinase may play a key role in the control of methylations via regulation of the intracellular concentration of adenosylhomocysteine. Required for DNA methylation-dependent gene silencing. The polypeptide is Adenosylhomocysteinase 1 (Arabidopsis thaliana (Mouse-ear cress)).